The sequence spans 678 residues: Methionine--tRNA ligase (678 aa).

The short motif at 14 to 24 (PYANGSIHLGH) is the 'HIGH' region element. Zn(2+) contacts are provided by Cys145, Cys148, Cys158, and Cys161. The 'KMSKS' region motif lies at 331–335 (KMSKS). Lys334 provides a ligand contact to ATP. The 103-residue stretch at 576 to 678 (AFAAVDLRIA…SGAKPGQRVK (103 aa)) folds into the tRNA-binding domain.

The protein belongs to the class-I aminoacyl-tRNA synthetase family. MetG type 1 subfamily. In terms of assembly, homodimer. The cofactor is Zn(2+).

The protein resides in the cytoplasm. It carries out the reaction tRNA(Met) + L-methionine + ATP = L-methionyl-tRNA(Met) + AMP + diphosphate. Functionally, is required not only for elongation of protein synthesis but also for the initiation of all mRNA translation through initiator tRNA(fMet) aminoacylation. This Pseudomonas aeruginosa (strain UCBPP-PA14) protein is Methionine--tRNA ligase.